A 1379-amino-acid chain; its full sequence is MAVEEKNSPTGAAMTNTGILVPSSQQSLPEWWTKTQKFFSRENTITPTFGYFRLLFGTQPGKTDIALIVIGTIAGIGAGIPFPLLGILFGELVDDLNSSTCSTTQAPPGGYQAAITTKVLQVIYVSILNFVCMYIHTGCWSMVGERLVRRLRTKYFHSLLRQEIAFTDTLPSGDVTSRLVSDIEVIQAGTSEKVGLFIGTISYFVAAYIVAFLKVATIAAMLMSVVPIYFLMAFGGGHYIKKYSGRISTHINAATSIVSSSLSHMSIVHAFNANARLEALFAQHLVSARMDALKKAITHSIQFGMLYFVAYASNALAFWQGSRMIADLAEGKPSKVSVGAVYTVIFVLLDASFVLSQMAPFMHIFASAASAGDRLMTTIKRQSAIDGTSSEGDSTISLASEEIELQDVTFNYPARPEVPVLQGVSFKIPPNKHTAIVGTSGSGKSTVVALLERLYDPITGCVRVGNRDLKEINVRHLRGSIGLVQQEPNLLDRSILENIAHGLVSSSQEKHKHLLPTLLGPSLSELTEKIRQGASEDEAVTEQGDVVREIVNLTRHAATLSNAIDFINALPDGLATRVGSSGAELSGGQKQRIALARALIRDPPVLLLDEATAALDSTSERLIQAALNKVSENVTTVSIAHRLATAKDADNIIVMQKGRVMEQGTHMDLVARDGVYAGMVRLQNIGKFSSSSSIMTESTQVDANIDRSLTTDTLLNKEEKLSLEQGVLDEKEKPAQLYMPEEADSLPTEPENEKEKPKQTLWATMKGSFPLIRPNILLISLGLITSIMIGVSYTGEAVIFGHTVGSLSVCRGGPSIRSSGMLFGLLFFILAIVKFAAVIVNGAAFGWAAEKTLYRTRVLSLRSLLRQPLEWHNADGRTPGLLVALVTSDASALSSLTGTTIGVLFSTVANLFAGVILSHVIAWKIAVVLLATLPVLLASGVLRLRVMAQYQKKHQKAYAKATAITVESVDNIKSIAAFSLEQEAYSVFNRSLKAPYKSNMKSVLHGNFWLSLAYSISTLVYALAYWWGSQQILAGMYTQVQFFIVLPALLFSTQSCGQMFALVPDISKARIAASNIVDLLSIKHEGDEEYDKTGSKASAKHTDPRFNMLEDKPRDVEAQLITTTPSSFPTKGMGVQFRNVHFRYPSRPNQPALDDLSINISPGQFCALVGPSGSGKSTTFALLEKFYNPASGSIIIDGVDITKQSGAAFRDTIALVPQENVMFEGTVAFNIGLGARPDVEATQEEIEEACRLANIHDTIAALPDGYNTVCSQDGKQFSGGQRQRLSIARALVRKPRLLLLDESTSALDVESEKHVQDALAKVARKTTIVAIAHRLNTIHRADRIFMIEGGRCVDQGTHAELVERCESYRANVIHQSLDA.

The chain crosses the membrane as a helical span at residues 65–85 (IALIVIGTIAGIGAGIPFPLL). An ABC transmembrane type-1 1 domain is found at 69-367 (VIGTIAGIGA…MAPFMHIFAS (299 aa)). N97 is a glycosylation site (N-linked (GlcNAc...) asparagine). A run of 5 helical transmembrane segments spans residues 119–139 (VLQVIYVSILNFVCMYIHTGC), 193–213 (KVGLFIGTISYFVAAYIVAFL), 215–235 (VATIAAMLMSVVPIYFLMAFG), 301–321 (IQFGMLYFVAYASNALAFWQG), and 336–356 (VSVGAVYTVIFVLLDASFVLS). The ABC transporter 1 domain occupies 403 to 682 (IELQDVTFNY…DGVYAGMVRL (280 aa)). An ATP-binding site is contributed by 438 to 445 (GTSGSGKS). 2 N-linked (GlcNAc...) asparagine glycosylation sites follow: N552 and N633. Residues 738-758 (YMPEEADSLPTEPENEKEKPK) are disordered. The next 4 membrane-spanning stretches (helical) occupy residues 781 to 801 (LGLITSIMIGVSYTGEAVIFG), 820 to 840 (GMLFGLLFFILAIVKFAAVIV), 881 to 901 (LLVALVTSDASALSSLTGTTI), and 920 to 942 (VIAWKIAVVLLATLPVLLASGVL). The ABC transmembrane type-1 2 domain occupies 781–1068 (LGLITSIMIG…MFALVPDISK (288 aa)). N989 carries an N-linked (GlcNAc...) asparagine glycan. Helical transmembrane passes span 1008-1028 (FWLSLAYSISTLVYALAYWWG) and 1032-1052 (ILAGMYTQVQFFIVLPALLFS). The ABC transporter 2 domain occupies 1135-1374 (VQFRNVHFRY…CESYRANVIH (240 aa)). 1170–1177 (GPSGSGKS) serves as a coordination point for ATP.

The protein belongs to the ABC transporter superfamily. ABCB family. Multidrug resistance exporter (TC 3.A.1.201) subfamily.

Its subcellular location is the cell membrane. Functionally, pleiotropic ABC efflux transporter that may be involved in the modulation susceptibility to a wide range of unrelated cytotoxic compounds. The protein is ABC multidrug transporter MDR2 of Trichophyton interdigitale (strain MR816).